We begin with the raw amino-acid sequence, 445 residues long: Exodeoxyribonuclease 7 large subunit (445 aa).

This sequence belongs to the XseA family. In terms of assembly, heterooligomer composed of large and small subunits.

Its subcellular location is the cytoplasm. It catalyses the reaction Exonucleolytic cleavage in either 5'- to 3'- or 3'- to 5'-direction to yield nucleoside 5'-phosphates.. Bidirectionally degrades single-stranded DNA into large acid-insoluble oligonucleotides, which are then degraded further into small acid-soluble oligonucleotides. The protein is Exodeoxyribonuclease 7 large subunit of Xanthomonas oryzae pv. oryzae (strain PXO99A).